Here is a 335-residue protein sequence, read N- to C-terminus: N-acetyl-gamma-glutamyl-phosphate reductase (335 aa).

The active site involves Cys-147.

It belongs to the NAGSA dehydrogenase family. Type 1 subfamily.

Its subcellular location is the cytoplasm. It carries out the reaction N-acetyl-L-glutamate 5-semialdehyde + phosphate + NADP(+) = N-acetyl-L-glutamyl 5-phosphate + NADPH + H(+). The protein operates within amino-acid biosynthesis; L-arginine biosynthesis; N(2)-acetyl-L-ornithine from L-glutamate: step 3/4. Its function is as follows. Catalyzes the NADPH-dependent reduction of N-acetyl-5-glutamyl phosphate to yield N-acetyl-L-glutamate 5-semialdehyde. The sequence is that of N-acetyl-gamma-glutamyl-phosphate reductase from Sulfurovum sp. (strain NBC37-1).